A 399-amino-acid chain; its full sequence is Tyrosine--tRNA ligase (399 aa).

The 'HIGH' region motif lies at Pro42–His51. The 'KMSKS' region signature appears at Lys226–Ser230. An ATP-binding site is contributed by Lys229. An S4 RNA-binding domain is found at Ile337–Val398.

It belongs to the class-I aminoacyl-tRNA synthetase family. TyrS type 2 subfamily. In terms of assembly, homodimer.

Its subcellular location is the cytoplasm. The enzyme catalyses tRNA(Tyr) + L-tyrosine + ATP = L-tyrosyl-tRNA(Tyr) + AMP + diphosphate + H(+). Its function is as follows. Catalyzes the attachment of tyrosine to tRNA(Tyr) in a two-step reaction: tyrosine is first activated by ATP to form Tyr-AMP and then transferred to the acceptor end of tRNA(Tyr). The chain is Tyrosine--tRNA ligase from Colwellia psychrerythraea (strain 34H / ATCC BAA-681) (Vibrio psychroerythus).